A 196-amino-acid chain; its full sequence is Venom platylysin (196 aa).

This sequence belongs to the redulysin-like family. In terms of tissue distribution, expressed by the venom gland.

It is found in the secreted. Probable insecticidal toxin that has been detected in a semi-pure insecticidal fraction. This Platymeris biguttatus (Two-spotted assassin bug) protein is Venom platylysin.